A 261-amino-acid polypeptide reads, in one-letter code: Sulfur carrier protein FdhD (261 aa).

The active-site Cysteine persulfide intermediate is the Cys105. 245 to 250 provides a ligand contact to Mo-bis(molybdopterin guanine dinucleotide); that stretch reads FIRGDR.

It belongs to the FdhD family.

Its subcellular location is the cytoplasm. Its function is as follows. Required for formate dehydrogenase (FDH) activity. Acts as a sulfur carrier protein that transfers sulfur from IscS to the molybdenum cofactor prior to its insertion into FDH. The sequence is that of Sulfur carrier protein FdhD from Listeria innocua serovar 6a (strain ATCC BAA-680 / CLIP 11262).